The sequence spans 560 residues: Oxygen-dependent choline dehydrogenase (560 aa).

FAD is bound at residue 8–37 (DYIIIGAGSAGNVLATRLTEDADVSVLLLE). H475 (proton acceptor) is an active-site residue.

This sequence belongs to the GMC oxidoreductase family. It depends on FAD as a cofactor.

It carries out the reaction choline + A = betaine aldehyde + AH2. The enzyme catalyses betaine aldehyde + NAD(+) + H2O = glycine betaine + NADH + 2 H(+). It functions in the pathway amine and polyamine biosynthesis; betaine biosynthesis via choline pathway; betaine aldehyde from choline (cytochrome c reductase route): step 1/1. In terms of biological role, involved in the biosynthesis of the osmoprotectant glycine betaine. Catalyzes the oxidation of choline to betaine aldehyde and betaine aldehyde to glycine betaine at the same rate. This Stenotrophomonas maltophilia (strain R551-3) protein is Oxygen-dependent choline dehydrogenase.